Here is a 483-residue protein sequence, read N- to C-terminus: Serine hydroxymethyltransferase, cytosolic (483 aa).

Position 257 is an N6-(pyridoxal phosphate)lysine (K257).

The protein belongs to the SHMT family. In terms of assembly, homotetramer. Identified in complex with ABRAXAS2 and the other subunits of the BRISC complex, at least composed of ABRAXAS2, BRCC3/BRCC36, BABAM2 and BABAM1/NBA1. Pyridoxal 5'-phosphate serves as cofactor.

Its subcellular location is the cytoplasm. It carries out the reaction (6R)-5,10-methylene-5,6,7,8-tetrahydrofolate + glycine + H2O = (6S)-5,6,7,8-tetrahydrofolate + L-serine. It participates in one-carbon metabolism; tetrahydrofolate interconversion. Its function is as follows. Interconversion of serine and glycine. This Pongo abelii (Sumatran orangutan) protein is Serine hydroxymethyltransferase, cytosolic (SHMT1).